The primary structure comprises 880 residues: Valine--tRNA ligase (880 aa).

The 'HIGH' region motif lies at 48–58 (PNVTGKLHLGH). A 'KMSKS' region motif is present at residues 524-528 (KMSKS). Lys527 contributes to the ATP binding site. Positions 808–879 (LAGLINIEEE…VKERIAQLRS (72 aa)) form a coiled coil.

The protein belongs to the class-I aminoacyl-tRNA synthetase family. ValS type 1 subfamily. As to quaternary structure, monomer.

Its subcellular location is the cytoplasm. The catalysed reaction is tRNA(Val) + L-valine + ATP = L-valyl-tRNA(Val) + AMP + diphosphate. Catalyzes the attachment of valine to tRNA(Val). As ValRS can inadvertently accommodate and process structurally similar amino acids such as threonine, to avoid such errors, it has a 'posttransfer' editing activity that hydrolyzes mischarged Thr-tRNA(Val) in a tRNA-dependent manner. The sequence is that of Valine--tRNA ligase from Enterococcus faecalis (strain ATCC 700802 / V583).